The following is a 189-amino-acid chain: MTKLLVGLGNPGDKYFETKHNVGFMLIDQLAKKQNVTFTHDKIFQADLASFFLNGEKIYLVKPTTFMNESGKAVHALLTYYGLDIDDLLIIYDDLDMEVGKIRLRAKGSAGGHNGIKSIIQHIGTQVFNRVKIGIGRPKNGMSVVHHVLSKFDRDDYIGILQSVDKVDDSVNYYLQEKNFEKTMQRYNG.

A tRNA-binding site is contributed by Y15. Catalysis depends on H20, which acts as the Proton acceptor. Residues F66, N68, and N114 each coordinate tRNA.

This sequence belongs to the PTH family. As to quaternary structure, monomer.

Its subcellular location is the cytoplasm. The enzyme catalyses an N-acyl-L-alpha-aminoacyl-tRNA + H2O = an N-acyl-L-amino acid + a tRNA + H(+). In terms of biological role, hydrolyzes ribosome-free peptidyl-tRNAs (with 1 or more amino acids incorporated), which drop off the ribosome during protein synthesis, or as a result of ribosome stalling. Functionally, catalyzes the release of premature peptidyl moieties from peptidyl-tRNA molecules trapped in stalled 50S ribosomal subunits, and thus maintains levels of free tRNAs and 50S ribosomes. In Streptococcus pneumoniae (strain P1031), this protein is Peptidyl-tRNA hydrolase.